A 133-amino-acid chain; its full sequence is Small ribosomal subunit protein uS8 (133 aa).

It belongs to the universal ribosomal protein uS8 family. As to quaternary structure, part of the 30S ribosomal subunit.

Functionally, one of the primary rRNA binding proteins, it binds directly to 16S rRNA central domain where it helps coordinate assembly of the platform of the 30S subunit. This chain is Small ribosomal subunit protein uS8, found in Metallosphaera sedula (strain ATCC 51363 / DSM 5348 / JCM 9185 / NBRC 15509 / TH2).